Reading from the N-terminus, the 90-residue chain is Elongation factor 1-beta (90 aa).

It belongs to the EF-1-beta/EF-1-delta family.

In terms of biological role, promotes the exchange of GDP for GTP in EF-1-alpha/GDP, thus allowing the regeneration of EF-1-alpha/GTP that could then be used to form the ternary complex EF-1-alpha/GTP/AAtRNA. This chain is Elongation factor 1-beta (ef1b), found in Aeropyrum pernix (strain ATCC 700893 / DSM 11879 / JCM 9820 / NBRC 100138 / K1).